The chain runs to 225 residues: Probable manganese catalase (225 aa).

Mn(2+) is bound at residue Glu37. 2 residues coordinate Ca(2+): Asp58 and Asp62. Mn(2+) is bound by residues Glu67, His70, Glu138, and His171. Ser204 contacts Ca(2+). The interval Ser204–Arg225 is disordered. The span at Pro213 to Arg225 shows a compositional bias: polar residues.

This sequence belongs to the manganese catalase family. Requires Ca(2+) as cofactor. Mn(2+) is required as a cofactor.

It catalyses the reaction 2 H2O2 = O2 + 2 H2O. Functionally, catalyzes the decomposition of hydrogen peroxide into water and oxygen. This is Probable manganese catalase from Clostridium acetobutylicum (strain ATCC 824 / DSM 792 / JCM 1419 / IAM 19013 / LMG 5710 / NBRC 13948 / NRRL B-527 / VKM B-1787 / 2291 / W).